A 1916-amino-acid polypeptide reads, in one-letter code: Endoribonuclease Dicer (1916 aa).

Residues 51–227 (LLEAALDHNT…ELEEKIQKLE (177 aa)) form the Helicase ATP-binding domain. 64–71 (LNTGSGKT) contributes to the ATP binding site. The DECH box motif lies at 175–178 (DECH). The interval 256 to 595 (DCGPFTDRSG…LRNKCSKSAD (340 aa)) is required for interaction with PRKRA and TARBP2. The disordered stretch occupies residues 409-433 (YVSWSDSEDDDDDEEIEEKEKPETN). Residues Ser-413 and Ser-415 each carry the phosphoserine modification. A compositionally biased stretch (acidic residues) spans 414–425 (DSEDDDDDEEIE). The 170-residue stretch at 433 to 602 (NFPSPFTNIL…SADGAEADVH (170 aa)) folds into the Helicase C-terminal domain. The 93-residue stretch at 630–722 (AIGHINRYCA…MPVGKETVKY (93 aa)) folds into the Dicer dsRNA-binding fold domain. Positions 726-745 (LDLHDEEETSVPGRPGSTKR) are disordered. The region spanning 895 to 1042 (KFMEDIEKSE…LVPELCAIHP (148 aa)) is the PAZ domain. 2 positions are modified to phosphoserine: Ser-1016 and Ser-1160. The region spanning 1276-1403 (DSEQSPSVGY…SEKWEKDEMT (128 aa)) is the RNase III 1 domain. Glu-1316, Glu-1395, and Glu-1398 together coordinate Mg(2+). Phosphoserine occurs at positions 1456, 1464, and 1466. Residues 1598–1626 (ALDPAQENGSSQQKSLSGSCAAPVGPRSS) form a disordered region. Residues 1604–1615 (ENGSSQQKSLSG) are compositionally biased toward polar residues. The 159-residue stretch at 1660-1818 (FETFEKKINY…LAGAIYMDSG (159 aa)) folds into the RNase III 2 domain. Mg(2+) is bound by residues Glu-1699, Asp-1804, and Glu-1807. The 66-residue stretch at 1843 to 1908 (VPRSPVRELL…ARRALRSLKA (66 aa)) folds into the DRBM domain. Ser-1862 is modified (phosphoserine).

This sequence belongs to the helicase family. Dicer subfamily. As to quaternary structure, component of the RISC loading complex (RLC), or micro-RNA (miRNA) loading complex (miRLC), which is composed of DICER1, AGO2 and TARBP2; DICER1 and TARBP2 are required to process precursor miRNAs (pre-miRNAs) to mature miRNAs and then load them onto AGO2. Note that the trimeric RLC/miRLC is also referred to as RISC. Interacts with DHX9, AGO1, PIWIL1 and PRKRA. Interacts with AGO2, TARBP2, EIF6, MOV10 and RPL7A (60S ribosome subunit); they form a large RNA-induced silencing complex (RISC). Interacts with BCDIN3D. Interacts (via Dicer dsRNA-binding fold domain) with ALOX5 (via PLAT domain); this interaction enhances arachidonate 5-lipoxygenase activity and modifies the miRNA precursor processing activity of DICER1. Requires Mg(2+) as cofactor. Mn(2+) is required as a cofactor. Isoform 1 is expressed in a wide variety of tissues. Isoform 2 is specifically expressed in oocytes during their growth (at protein level).

It is found in the cytoplasm. The catalysed reaction is Endonucleolytic cleavage to 5'-phosphomonoester.. In terms of biological role, double-stranded RNA (dsRNA) endoribonuclease playing a central role in short dsRNA-mediated post-transcriptional gene silencing. Cleaves naturally occurring long dsRNAs and short hairpin pre-microRNAs (miRNA) into fragments of twenty-one to twenty-three nucleotides with 3' overhang of two nucleotides, producing respectively short interfering RNAs (siRNA) and mature microRNAs. SiRNAs and miRNAs serve as guide to direct the RNA-induced silencing complex (RISC) to complementary RNAs to degrade them or prevent their translation. Gene silencing mediated by siRNAs, also called RNA interference, controls the elimination of transcripts from mobile and repetitive DNA elements of the genome but also the degradation of exogenous RNA of viral origin for instance. The miRNA pathway on the other side is a mean to specifically regulate the expression of target genes. Functionally, more active than isoform 1 to process long double-stranded RNA into siRNAs. Responsible for the accumulation of endogenous siRNAs observed in mouse oocytes compared to somatic cells and it regulates meiotic spindle organization in female germline. The protein is Endoribonuclease Dicer (Dicer1) of Mus musculus (Mouse).